Here is a 206-residue protein sequence, read N- to C-terminus: Regulatory protein CysR (206 aa).

The HTH crp-type domain occupies 120-196 (RRAEAKLASL…DRALIVRYPE (77 aa)). The segment at residues 156–175 (HQVIAELSGSTRVTTTRLLG) is a DNA-binding region (H-T-H motif).

It localises to the cytoplasm. Functionally, probably regulates the expression of genes from the sulfate permease complex. The protein is Regulatory protein CysR (cysR) of Synechococcus elongatus (strain ATCC 33912 / PCC 7942 / FACHB-805) (Anacystis nidulans R2).